The chain runs to 260 residues: Thymidylate synthase (260 aa).

A dUMP-binding site is contributed by arginine 21. Histidine 51 is a (6R)-5,10-methylene-5,6,7,8-tetrahydrofolate binding site. Residue arginine 122–arginine 123 coordinates dUMP. The active-site Nucleophile is cysteine 142. Residues arginine 162–aspartate 165, asparagine 173, and histidine 203–tyrosine 205 contribute to the dUMP site. Aspartate 165 contributes to the (6R)-5,10-methylene-5,6,7,8-tetrahydrofolate binding site. Residue alanine 259 participates in (6R)-5,10-methylene-5,6,7,8-tetrahydrofolate binding.

Belongs to the thymidylate synthase family. Bacterial-type ThyA subfamily. In terms of assembly, homodimer.

Its subcellular location is the cytoplasm. It catalyses the reaction dUMP + (6R)-5,10-methylene-5,6,7,8-tetrahydrofolate = 7,8-dihydrofolate + dTMP. It functions in the pathway pyrimidine metabolism; dTTP biosynthesis. In terms of biological role, catalyzes the reductive methylation of 2'-deoxyuridine-5'-monophosphate (dUMP) to 2'-deoxythymidine-5'-monophosphate (dTMP) while utilizing 5,10-methylenetetrahydrofolate (mTHF) as the methyl donor and reductant in the reaction, yielding dihydrofolate (DHF) as a by-product. This enzymatic reaction provides an intracellular de novo source of dTMP, an essential precursor for DNA biosynthesis. This chain is Thymidylate synthase, found in Methylococcus capsulatus (strain ATCC 33009 / NCIMB 11132 / Bath).